The primary structure comprises 116 residues: Nucleoid-associated protein PMT9312_0020 (116 aa).

Belongs to the YbaB/EbfC family. As to quaternary structure, homodimer.

Its subcellular location is the cytoplasm. It is found in the nucleoid. In terms of biological role, binds to DNA and alters its conformation. May be involved in regulation of gene expression, nucleoid organization and DNA protection. This Prochlorococcus marinus (strain MIT 9312) protein is Nucleoid-associated protein PMT9312_0020.